A 168-amino-acid polypeptide reads, in one-letter code: Large ribosomal subunit protein uL10 (168 aa).

This sequence belongs to the universal ribosomal protein uL10 family. Part of the ribosomal stalk of the 50S ribosomal subunit. The N-terminus interacts with L11 and the large rRNA to form the base of the stalk. The C-terminus forms an elongated spine to which L12 dimers bind in a sequential fashion forming a multimeric L10(L12)X complex.

Forms part of the ribosomal stalk, playing a central role in the interaction of the ribosome with GTP-bound translation factors. In Lacticaseibacillus casei (strain BL23) (Lactobacillus casei), this protein is Large ribosomal subunit protein uL10.